A 540-amino-acid polypeptide reads, in one-letter code: Sterol O-acyltransferase 1 (540 aa).

The interval 1 to 20 (MSLRNRLSKSGENPEQDEAQ) is disordered. Topologically, residues 1–128 (MSLRNRLSKS…LDELFEVDHI (128 aa)) are cytoplasmic. Ser2 carries the phosphoserine modification. Cholesterol is bound at residue His127. A helical transmembrane segment spans residues 129–150 (RTIYHMFIALLILFVLSTIVVD). Over 151–170 (YIDEGRLVLEFNLLAYAFGK) the chain is Lumenal. A helical transmembrane segment spans residues 171–196 (FPTVIWTWWAMFLSTLSIPYFLFQRW). Topologically, residues 197-208 (AHGYSKSSHPLI) are cytoplasmic. Residues 209-234 (YSLVHGLLFLVFQLGVLGFVPTYVVL) traverse the membrane as a helical segment. Over 235-242 (AYTLPPAS) the chain is Lumenal. The chain crosses the membrane as a helical span at residues 243 to 266 (RFILILEQIRLIMKAHSFVRENIP). Over 267-309 (RVLNAAKEKSSKDPLPTVNQYLYFLFAPTLIYRDNYPRTPTVR) the chain is Cytoplasmic. Residues 310–342 (WGYVAMQFLQVFGCLFYVYYIFERLCAPLFRNI) form a helical membrane-spanning segment. Residues 343-359 (KQEPFSARVLVLCVFNS) are Lumenal-facing. The chain crosses the membrane as a helical span at residues 360 to 385 (ILPGVLILFLSFFAFLHCWLNAFAEM). Residues 386 to 433 (LRFGDRMFYKDWWNSTSYSNYYRTWNVVVHDWLYYYVYKDLLWFFSKR) are Cytoplasmic-facing. An FYXDWWN motif motif is present at residues 393–399 (FYKDWWN). Asn405, Arg408, Asn411, His415, Tyr423, Lys435, and Ser446 together coordinate an acyl-CoA. A helical membrane pass occupies residues 434-458 (FKSAAMLAVFALSAVVHEYALAICL). His450 is a catalytic residue. The Lumenal segment spans residues 459–464 (SYFYPV). A helical transmembrane segment spans residues 465-480 (LFVLFMFFGMAFNFIV). The Cytoplasmic segment spans residues 481–486 (NDSRKR). A helical transmembrane segment spans residues 487–518 (PIWNIMVWASLFLGYGLILCFYSQEWYARQHC). Cys518 and Cys536 form a disulfide bridge. Topologically, residues 519-540 (PLKNPTFLDYVRPRTWTCRYVF) are lumenal.

It belongs to the membrane-bound acyltransferase family. Sterol o-acyltransferase subfamily. May form homo- or heterodimers. Interacts with UBIAD1.

Its subcellular location is the endoplasmic reticulum membrane. It carries out the reaction a sterol + a long-chain fatty acyl-CoA = a long-chain 3-hydroxysterol ester + CoA. The enzyme catalyses cholesterol + an acyl-CoA = a cholesterol ester + CoA. The catalysed reaction is cholesterol + (9Z)-octadecenoyl-CoA = cholesteryl (9Z-octadecenoate) + CoA. It catalyses the reaction cholesterol + hexadecanoyl-CoA = cholesteryl hexadecanoate + CoA. It carries out the reaction octadecanoyl-CoA + cholesterol = cholesteryl octadecanoate + CoA. The enzyme catalyses (9Z,12Z)-octadecadienoyl-CoA + cholesterol = cholesteryl (9Z,12Z)-octadecadienoate + CoA. The catalysed reaction is (5Z,8Z,11Z,14Z)-eicosatetraenoyl-CoA + cholesterol = cholesteryl (5Z,8Z,11Z,14Z)-eicosatetraenoate + CoA. It catalyses the reaction (9Z)-hexadecenoyl-CoA + cholesterol = cholesteryl (9Z)-hexadecenoate + CoA. It carries out the reaction (11Z)-octadecenoyl-CoA + cholesterol = cholesteryl (11Z)-octadecenoate + CoA. The enzyme catalyses (7Z)-octadecenoyl-CoA + cholesterol = cholesteryl (7Z)-octadecenoate + CoA. Functionally, catalyzes the formation of fatty acid-cholesterol esters, which are less soluble in membranes than cholesterol. Plays a role in lipoprotein assembly and dietary cholesterol absorption. Preferentially utilizes oleoyl-CoA ((9Z)-octadecenoyl-CoA) as a substrate: shows a higher activity towards an acyl-CoA substrate with a double bond at the delta-9 position (9Z) than towards saturated acyl-CoA or an unsaturated acyl-CoA with a double bond at the delta-7 (7Z) or delta-11 (11Z) positions. The chain is Sterol O-acyltransferase 1 from Mus musculus (Mouse).